The chain runs to 255 residues: Electron transfer flavoprotein beta subunit lysine methyltransferase (255 aa).

Residues 1-32 constitute a mitochondrion transit peptide; the sequence is MAFSLCWKAPRSPWSFLQAVNNGSPLFLWRTV.

The protein belongs to the methyltransferase superfamily. ETFBKMT family. In terms of assembly, interacts with HSPD1; this protein may possibly be a methylation substrate.

The protein resides in the cytoplasm. Its subcellular location is the mitochondrion matrix. The enzyme catalyses L-lysyl-[protein] + 3 S-adenosyl-L-methionine = N(6),N(6),N(6)-trimethyl-L-lysyl-[protein] + 3 S-adenosyl-L-homocysteine + 3 H(+). Functionally, protein-lysine methyltransferase that selectively trimethylates the flavoprotein ETFB in mitochondria. Thereby, may negatively regulate the function of ETFB in electron transfer from Acyl-CoA dehydrogenases. The protein is Electron transfer flavoprotein beta subunit lysine methyltransferase of Mus musculus (Mouse).